A 398-amino-acid chain; its full sequence is Secreted aspartic protease 2 (398 aa).

The N-terminal stretch at 1 to 18 is a signal peptide; sequence MFLKNIFIALAIALLVDA. Residues 19–56 constitute a propeptide, activation peptide; that stretch reads TPTTTKRSAGFVALDFSVVKTPKAFPVTNGQEGKTSKR. Residues 70–384 enclose the Peptidase A1 domain; that stretch reads YAADITVGSN…DLDDNEISLA (315 aa). Aspartate 88 is an active-site residue. Residue 88-90 participates in pepstatin A binding; it reads DTG. A disulfide bond links cysteine 103 and cysteine 115. Residue 141–142 participates in pepstatin A binding; it reads GD. Residues aspartate 247 and aspartate 270 each coordinate Zn(2+). Residue aspartate 274 is part of the active site. Pepstatin A is bound at residue 274–278; sequence DSGTT. Cysteine 312 and cysteine 350 are disulfide-bonded. N-linked (GlcNAc...) asparagine glycans are attached at residues asparagine 313 and asparagine 321.

This sequence belongs to the peptidase A1 family. Monomer.

It localises to the secreted. It carries out the reaction Preferential cleavage at the carboxyl of hydrophobic amino acids, but fails to cleave 15-Leu-|-Tyr-16, 16-Tyr-|-Leu-17 and 24-Phe-|-Phe-25 of insulin B chain. Activates trypsinogen, and degrades keratin.. In terms of biological role, secreted aspartic peptidases (SAPs) are a group of ten acidic hydrolases considered as key virulence factors. These enzymes supply the fungus with nutrient amino acids as well as are able to degrade the selected host's proteins involved in the immune defense. Induces host inflammatory cytokine production in a proteolytic activity-independent way. Plays a role in tissue damage during superficial infection. Moreover, acts toward human hemoglobin though limited proteolysis to generate a variety of antimicrobial hemocidins, enabling to compete with the other microorganisms of the same physiological niche using the microbicidal peptides generated from the host protein. Functionally, plays a key role in defense against host by cleaving histatin-5 (Hst 5), a peptide from human saliva that carries out fungicidal activity. The cleavage rate decreases in an order of SAP2 &gt; SAP9 &gt; SAP3 &gt; SAP7 &gt; SAP4 &gt; SAP1 &gt; SAP8. The first cleavage occurs between residues 'Lys-17' and 'His-18' of Hst 5, giving DSHAKRHHGYKRKFHEK and HHSHRGY peptides. Simultaneously, the DSHAKRHHGYKRK peptide is also formed. Further fragmentation by SAP2 results in FHEK and DSHAKRHHGY products. This chain is Secreted aspartic protease 2, found in Candida albicans (strain SC5314 / ATCC MYA-2876) (Yeast).